The primary structure comprises 201 residues: Two-component response regulator ORR9 (201 aa).

Residues 10 to 142 (HVLAVDDSLP…DMSKLKPHIL (133 aa)) form the Response regulatory domain. Asp-75 is modified (4-aspartylphosphate). A disordered region spans residues 149 to 201 (HYQQEQNLQSNSESNNSSNPTSENSSSSTSSNSHKRKAVDEEILPHTIRPRHS). Positions 158–180 (SNSESNNSSNPTSENSSSSTSSN) are enriched in low complexity.

This sequence belongs to the ARR family. Type-A subfamily. Post-translationally, two-component system major event consists of a His-to-Asp phosphorelay between a sensor histidine kinase (HK) and a response regulator (RR). In plants, the His-to-Asp phosphorelay involves an additional intermediate named Histidine-containing phosphotransfer protein (HPt). This multistep phosphorelay consists of a His-Asp-His-Asp sequential transfer of a phosphate group between first a His and an Asp of the HK protein, followed by the transfer to a conserved His of the HPt protein and finally the transfer to an Asp in the receiver domain of the RR protein.

Its function is as follows. Functions as a response regulator involved in His-to-Asp phosphorelay signal transduction system. Phosphorylation of the Asp residue in the receiver domain activates the ability of the protein to promote the transcription of target genes. Type-A response regulators seem to act as negative regulators of the cytokinin signaling. In Oryza sativa subsp. japonica (Rice), this protein is Two-component response regulator ORR9.